Reading from the N-terminus, the 144-residue chain is Deoxyuridine 5'-triphosphate nucleotidohydrolase (144 aa).

Substrate contacts are provided by residues 63–65 (RSG), Asn76, and 80–82 (TID).

It belongs to the dUTPase family. The cofactor is Mg(2+).

It carries out the reaction dUTP + H2O = dUMP + diphosphate + H(+). Its pathway is pyrimidine metabolism; dUMP biosynthesis; dUMP from dCTP (dUTP route): step 2/2. This enzyme is involved in nucleotide metabolism: it produces dUMP, the immediate precursor of thymidine nucleotides and it decreases the intracellular concentration of dUTP so that uracil cannot be incorporated into DNA. The chain is Deoxyuridine 5'-triphosphate nucleotidohydrolase from Porphyromonas gingivalis (strain ATCC 33277 / DSM 20709 / CIP 103683 / JCM 12257 / NCTC 11834 / 2561).